The primary structure comprises 597 residues: MPEEVHHGEEEVETFAFQAEIAQLISLIINTFYSNEEIFLQELISNASDALDKIRYESLTDPSKLDSGKELKIDIIPNPQERTLALVDTGIGMTKADLINNLRTIAKSGTKACMEALQAEKLVVITKHNDDEQYAWESSAGGSFTVHADHGEPIGRGTKVILHLKEDQTEYLEERRVKEVVKKHSQFIGYPITLYLEKEQDKEISDDEAEEEKGEKEEEDKDDEEKPKIKDVGSDEEDDSKEYGEFYKSLTSDWEDHLAVKHFSVEGQLEFRALLFSPRRAPFDLFENKKKKNNIKLYVRRVFIMDSCDELIPEYLNFIHGVVDSEDLPLNISREMLQQSKILKYVSHMKETQKSTYYITGESKEQVANSAFVERVRKQGFEVVYMTEPIDEYCVQQLKEFDGKSLVSVTKEGLELPEDEEEKKKMEESKEKFENLCKLMKEILDKKVEKVTISNRLVSSPCCIVTSTYGWTANMEQIMKAQALRDNSTMGYMMAKKHLEINPDHPIMETLRQKAEADKNDKAVKDLVVLLFETALLSSGFSLEDPQTHSNHIYHMIKLGLGTDEDEVAAEEPSDAVPDEIPPLEGDEDASRMEEVD.

ATP is bound by residues asparagine 46, aspartate 88, and lysine 107. The disordered stretch occupies residues 201 to 241; sequence DKEISDDEAEEEKGEKEEEDKDDEEKPKIKDVGSDEEDDSK. Positions 204–223 are enriched in acidic residues; that stretch reads ISDDEAEEEKGEKEEEDKDD. Positions 224 to 233 are enriched in basic and acidic residues; that stretch reads EEKPKIKDVG. Arginine 334 lines the ATP pocket. The stretch at 414 to 446 forms a coiled coil; sequence LELPEDEEEKKKMEESKEKFENLCKLMKEILDK. A compositionally biased stretch (acidic residues) spans 564–578; that stretch reads DEDEVAAEEPSDAVP. The disordered stretch occupies residues 564-597; sequence DEDEVAAEEPSDAVPDEIPPLEGDEDASRMEEVD. A TPR repeat-binding motif is present at residues 593–597; it reads MEEVD.

This sequence belongs to the heat shock protein 90 family. In terms of assembly, homodimer.

It localises to the cytoplasm. In terms of biological role, putative molecular chaperone that may promote the maturation, structural maintenance and proper regulation of specific target proteins. In Homo sapiens (Human), this protein is Putative heat shock protein HSP 90-beta-3 (HSP90AB3P).